The primary structure comprises 432 residues: Glutamate-1-semialdehyde 2,1-aminomutase 2 (432 aa).

Lys-268 is modified (N6-(pyridoxal phosphate)lysine).

This sequence belongs to the class-III pyridoxal-phosphate-dependent aminotransferase family. HemL subfamily. In terms of assembly, homodimer. Requires pyridoxal 5'-phosphate as cofactor.

The protein localises to the cytoplasm. The enzyme catalyses (S)-4-amino-5-oxopentanoate = 5-aminolevulinate. The protein operates within porphyrin-containing compound metabolism; protoporphyrin-IX biosynthesis; 5-aminolevulinate from L-glutamyl-tRNA(Glu): step 2/2. The chain is Glutamate-1-semialdehyde 2,1-aminomutase 2 from Listeria monocytogenes serovar 1/2a (strain ATCC BAA-679 / EGD-e).